A 394-amino-acid polypeptide reads, in one-letter code: Ribulose bisphosphate carboxylase large chain (394 aa).

The residue at position 5 (Lys-5) is an N6,N6,N6-trimethyllysine. Positions 114 and 164 each coordinate substrate. Residue Lys-166 is the Proton acceptor of the active site. Position 168 (Lys-168) interacts with substrate. Mg(2+) is bound by residues Lys-192, Asp-194, and Glu-195. At Lys-192 the chain carries N6-carboxylysine. His-285 acts as the Proton acceptor in catalysis. Substrate contacts are provided by Arg-286, His-318, and Ser-370.

This sequence belongs to the RuBisCO large chain family. Type I subfamily. Heterohexadecamer of 8 large chains and 8 small chains. It depends on Mg(2+) as a cofactor.

It is found in the plastid. The protein resides in the chloroplast. It catalyses the reaction 2 (2R)-3-phosphoglycerate + 2 H(+) = D-ribulose 1,5-bisphosphate + CO2 + H2O. The catalysed reaction is D-ribulose 1,5-bisphosphate + O2 = 2-phosphoglycolate + (2R)-3-phosphoglycerate + 2 H(+). RuBisCO catalyzes two reactions: the carboxylation of D-ribulose 1,5-bisphosphate, the primary event in carbon dioxide fixation, as well as the oxidative fragmentation of the pentose substrate in the photorespiration process. Both reactions occur simultaneously and in competition at the same active site. The chain is Ribulose bisphosphate carboxylase large chain (rbcL) from Euryale ferox (Gorgon plant).